The chain runs to 448 residues: Exodeoxyribonuclease 7 large subunit (448 aa).

This sequence belongs to the XseA family. Heterooligomer composed of large and small subunits.

The protein localises to the cytoplasm. It localises to the nucleoid. It carries out the reaction Exonucleolytic cleavage in either 5'- to 3'- or 3'- to 5'-direction to yield nucleoside 5'-phosphates.. Its function is as follows. Bidirectionally degrades single-stranded DNA into large acid-insoluble oligonucleotides, which are then degraded further into small acid-soluble oligonucleotides. The chain is Exodeoxyribonuclease 7 large subunit from Bacillus subtilis (strain 168).